The sequence spans 204 residues: Putative peptidase PfaP (204 aa).

An N-terminal signal peptide occupies residues 1 to 27 (MRLRKTRKIVVSMKDMAASGGYYIASS). Residue Ser-19 is the Nucleophile of the active site. The active-site Proton donor/acceptor is Lys-70.

The protein belongs to the peptidase S49 family.

Functionally, possible protease. May be involved in export of periplasmic flagella proteins. This chain is Putative peptidase PfaP (pfaP), found in Leptospira borgpetersenii.